The sequence spans 338 residues: Ferrochelatase (338 aa).

Fe cation is bound by residues His210 and Glu291.

The protein belongs to the ferrochelatase family.

It is found in the cytoplasm. The enzyme catalyses heme b + 2 H(+) = protoporphyrin IX + Fe(2+). Its pathway is porphyrin-containing compound metabolism; protoheme biosynthesis; protoheme from protoporphyrin-IX: step 1/1. Functionally, catalyzes the ferrous insertion into protoporphyrin IX. The protein is Ferrochelatase of Helicobacter acinonychis (strain Sheeba).